The chain runs to 317 residues: Acetyl-coenzyme A carboxylase carboxyl transferase subunit alpha (317 aa).

Residues 37–291 enclose the CoA carboxyltransferase C-terminal domain; the sequence is KLQEKVDKLL…GNAIEDALDD (255 aa).

It belongs to the AccA family. In terms of assembly, acetyl-CoA carboxylase is a heterohexamer composed of biotin carboxyl carrier protein (AccB), biotin carboxylase (AccC) and two subunits each of ACCase subunit alpha (AccA) and ACCase subunit beta (AccD).

Its subcellular location is the cytoplasm. The catalysed reaction is N(6)-carboxybiotinyl-L-lysyl-[protein] + acetyl-CoA = N(6)-biotinyl-L-lysyl-[protein] + malonyl-CoA. It participates in lipid metabolism; malonyl-CoA biosynthesis; malonyl-CoA from acetyl-CoA: step 1/1. Functionally, component of the acetyl coenzyme A carboxylase (ACC) complex. First, biotin carboxylase catalyzes the carboxylation of biotin on its carrier protein (BCCP) and then the CO(2) group is transferred by the carboxyltransferase to acetyl-CoA to form malonyl-CoA. This Rhodospirillum centenum (strain ATCC 51521 / SW) protein is Acetyl-coenzyme A carboxylase carboxyl transferase subunit alpha.